A 336-amino-acid polypeptide reads, in one-letter code: Dihydroorotate dehydrogenase (quinone) (336 aa).

FMN is bound by residues 62–66 (AGLDK) and Thr86. Lys66 contacts substrate. 111–115 (NRMGF) contacts substrate. FMN is bound by residues Asn139 and Asn172. Substrate is bound at residue Asn172. Ser175 serves as the catalytic Nucleophile. Asn177 contributes to the substrate binding site. Lys217 and Thr245 together coordinate FMN. Residue 246–247 (NT) participates in substrate binding. FMN-binding positions include Gly268, Gly297, and 318 to 319 (YS).

Belongs to the dihydroorotate dehydrogenase family. Type 2 subfamily. As to quaternary structure, monomer. FMN serves as cofactor.

It localises to the cell membrane. The catalysed reaction is (S)-dihydroorotate + a quinone = orotate + a quinol. Its pathway is pyrimidine metabolism; UMP biosynthesis via de novo pathway; orotate from (S)-dihydroorotate (quinone route): step 1/1. In terms of biological role, catalyzes the conversion of dihydroorotate to orotate with quinone as electron acceptor. The polypeptide is Dihydroorotate dehydrogenase (quinone) (Serratia proteamaculans (strain 568)).